Reading from the N-terminus, the 277-residue chain is Myelin proteolipid protein (277 aa).

Topologically, residues 1–10 (MGLLECCARC) are cytoplasmic. S-palmitoyl cysteine attachment occurs at residues cysteine 6, cysteine 7, and cysteine 10. The helical transmembrane segment at 11–36 (LVGAPFASLVATGLCFFGVALFCGCG) threads the bilayer. At 37 to 59 (HEALTGTEKLIETYFSKNYQDYE) the chain is on the extracellular side. Residues 60 to 88 (YLINVIHAFQYVIYGTASFFFLYGALLLA) traverse the membrane as a helical segment. Over 89 to 151 (EGFYTTGAVR…LGKWLGHPDK (63 aa)) the chain is Cytoplasmic. The S-palmitoyl cysteine moiety is linked to residue cysteine 109. The residue at position 114 (serine 114) is a Phosphoserine. Phosphothreonine occurs at positions 116 and 118. S-palmitoyl cysteine attachment occurs at residues cysteine 139 and cysteine 141. The chain crosses the membrane as a helical span at residues 152-178 (FVGITYALTVVWLLVFACSAVPVYIYF). Residues 179 to 238 (NTWTTCQSIAFPSKTSASIGTLCADARMYGVLPWNAFPGKVCGSNLLSICKTAEFQMTFH) lie on the Extracellular side of the membrane. 2 cysteine pairs are disulfide-bonded: cysteine 184–cysteine 228 and cysteine 201–cysteine 220. Residue threonine 199 is the site of O-palmitoyl threonine attachment. The helical transmembrane segment at 239-268 (LFIAAFVGAAATLVSLLTFMIAATYNFAVL) threads the bilayer. The Cytoplasmic portion of the chain corresponds to 269–277 (KLMGRGTKF).

This sequence belongs to the myelin proteolipid protein family. In terms of assembly, interacts with MAL.

The protein resides in the cell membrane. It is found in the myelin membrane. Functionally, this is the major myelin protein from the central nervous system. It plays an important role in the formation or maintenance of the multilamellar structure of myelin. The sequence is that of Myelin proteolipid protein (PLP1) from Oryctolagus cuniculus (Rabbit).